The chain runs to 373 residues: Probable G-protein coupled receptor 173 (373 aa).

At 1 to 26 the chain is on the extracellular side; the sequence is MANTTGEPEEVSGALSPPSASAYVKL. Asparagine 3 carries N-linked (GlcNAc...) asparagine glycosylation. The chain crosses the membrane as a helical span at residues 27-47; that stretch reads VLLGLIMCVSLAGNAILSLLV. The Cytoplasmic portion of the chain corresponds to 48 to 59; the sequence is LKERALHKAPYY. A helical transmembrane segment spans residues 60-80; it reads FLLDLCLADGIRSAVCFPFVL. Topologically, residues 81–97 are extracellular; that stretch reads ASVRHGSSWTFSALSCK. Cysteine 96 and cysteine 174 are oxidised to a cystine. The helical transmembrane segment at 98–118 threads the bilayer; sequence IVAFMAVLFCFHAAFMLFCIS. Residues 119 to 139 lie on the Cytoplasmic side of the membrane; that stretch reads VTRYMAIAHHRFYAKRMTLWT. The helical transmembrane segment at 140–160 threads the bilayer; the sequence is CAAVICMAWTLSVAMAFPPVF. Over 161–188 the chain is Extracellular; sequence DVGTYKFIREEDQCIFEHRYFKANDTLG. N-linked (GlcNAc...) asparagine glycosylation occurs at asparagine 184. The chain crosses the membrane as a helical span at residues 189–209; that stretch reads FMLMLAVLMAATHAVYGKLLL. The Cytoplasmic portion of the chain corresponds to 210–287; the sequence is FEYRHRKMKP…VKGEKQLGRM (78 aa). Residues 288–308 form a helical membrane-spanning segment; that stretch reads FYAITLLFLLLWSPYIVACYW. The Extracellular portion of the chain corresponds to 309–322; it reads RVFVKACAVPHRYL. Residues 323-343 form a helical membrane-spanning segment; it reads ATAVWMSFAQAAVNPIVCFLL. The Cytoplasmic portion of the chain corresponds to 344–373; the sequence is NKDLKKCLRTHAPCWGTGGAPAPREPYCVM.

This sequence belongs to the G-protein coupled receptor 1 family. In terms of tissue distribution, expressed in the ovary, specifically in granulosa cells of follicles that have passed the primary stage and in oocytes (at protein level). Expressed at high levels in brain. Lower levels in small intestine. In brain regions, detected in all regions tested. Highest levels in the cerebellum and cerebral cortex.

It is found in the cell membrane. Its function is as follows. Is a receptor for the SMIM20 derived peptides Phoenixin-14 and Phoenixin-20. It mediates the Phoenixin-14 and Phoenixin-20 augmentation of gonadotropin-releasing hormone (GNRH) signaling in the hypothalamus and pituitary gland. In the ovary, it mediates the effects of Phoenixin-14 and Phoenixin-20 induced granulosa cell proliferation during follicular growth. The protein is Probable G-protein coupled receptor 173 (GPR173) of Homo sapiens (Human).